The primary structure comprises 267 residues: Thiamine thiazole synthase (267 aa).

Residues serine 41, 60-61, glycine 68, valine 132, and 160-162 contribute to the NAD(+) site; these read ER and HVD. Positions 162 and 177 each coordinate Fe cation. NAD(+) is bound at residue methionine 227. Arginine 237 is a glycine binding site.

The protein belongs to the THI4 family. Homooctamer; tetramer of dimers. Fe(2+) serves as cofactor.

It carries out the reaction hydrogen sulfide + glycine + NAD(+) = ADP-5-ethyl-4-methylthiazole-2-carboxylate + nicotinamide + 3 H2O + H(+). The protein operates within cofactor biosynthesis; thiamine diphosphate biosynthesis. In terms of biological role, involved in the biosynthesis of the thiazole moiety of thiamine. Catalyzes the conversion of NAD and glycine to adenosine diphosphate 5-(2-hydroxyethyl)-4-methylthiazole-2-carboxylate (ADT), an adenylated thiazole intermediate, using free sulfide as a source of sulfur. The sequence is that of Thiamine thiazole synthase from Saccharolobus islandicus (strain Y.N.15.51 / Yellowstone #2) (Sulfolobus islandicus).